We begin with the raw amino-acid sequence, 110 residues long: FMRFamide-like neuropeptides 11 (110 aa).

The first 22 residues, 1–22, serve as a signal peptide directing secretion; it reads MTQFSALALLLIVFVAASFAQS. The propeptide occupies 23–29; the sequence is YDDVSAE. Phe40 and Phe54 each carry phenylalanine amide. A disordered region spans residues 60–85; it reads LDEEDFAPESPLQGKRNGAPQPFVRF. Gln72 is modified (glutamine amide). Phe85 bears the Phenylalanine amide mark. Residues 88–110 constitute a propeptide that is removed on maturation; it reads SGQLDHMHDLLSTLQKLKFANNK.

Belongs to the FARP (FMRFamide related peptide) family. As to expression, each flp gene is expressed in a distinct set of neurons. Flp-11 is expressed in the DD, VD and DVB motor neurons, the PVC and URX interneurons, and the AUA, BAG, DA, LUA, and SAB neurons. Also expressed in head muscle, socket or sheath cells and uterine cells. Expressed exclusively in PHC sensory neurons in males. Expressed in AVK and RIS interneurons.

The protein resides in the secreted. Its function is as follows. FMRFamides and FMRFamide-like peptides are neuropeptides. Induces sleep-like quiescence behavior following release from RIS interneuron. Helps to sustain locomotion stop after gamma-aminobutyric acid (GABA) induces fast slowing response. Inhibits the late-stage body bend swimming frequency in animals through several receptors including frpr-3, npr-4 and npr-22. Potent inhibitor of the activity of the dissected pharyngeal myogenic muscle system. Acts as a ligand for the npr-22 receptor in vitro. Functionally, acts as a ligand for the npr-22 receptor in vitro. The protein is FMRFamide-like neuropeptides 11 of Caenorhabditis elegans.